A 116-amino-acid polypeptide reads, in one-letter code: Flagellar transcriptional regulator FlhD (116 aa).

The protein belongs to the FlhD family. As to quaternary structure, homodimer; disulfide-linked. Forms a heterohexamer composed of two FlhC and four FlhD subunits. Each FlhC binds a FlhD dimer, forming a heterotrimer, and a hexamer assembles by dimerization of two heterotrimers.

The protein resides in the cytoplasm. Functionally, functions in complex with FlhC as a master transcriptional regulator that regulates transcription of several flagellar and non-flagellar operons by binding to their promoter region. Activates expression of class 2 flagellar genes, including fliA, which is a flagellum-specific sigma factor that turns on the class 3 genes. Also regulates genes whose products function in a variety of physiological pathways. In Escherichia coli O157:H7, this protein is Flagellar transcriptional regulator FlhD.